Reading from the N-terminus, the 541-residue chain is 2-succinyl-5-enolpyruvyl-6-hydroxy-3-cyclohexene-1-carboxylate synthase (541 aa).

It belongs to the TPP enzyme family. MenD subfamily. In terms of assembly, homodimer. Requires Mg(2+) as cofactor. The cofactor is Mn(2+). It depends on thiamine diphosphate as a cofactor.

The catalysed reaction is isochorismate + 2-oxoglutarate + H(+) = 5-enolpyruvoyl-6-hydroxy-2-succinyl-cyclohex-3-ene-1-carboxylate + CO2. Its pathway is quinol/quinone metabolism; 1,4-dihydroxy-2-naphthoate biosynthesis; 1,4-dihydroxy-2-naphthoate from chorismate: step 2/7. The protein operates within quinol/quinone metabolism; menaquinone biosynthesis. Functionally, catalyzes the thiamine diphosphate-dependent decarboxylation of 2-oxoglutarate and the subsequent addition of the resulting succinic semialdehyde-thiamine pyrophosphate anion to isochorismate to yield 2-succinyl-5-enolpyruvyl-6-hydroxy-3-cyclohexene-1-carboxylate (SEPHCHC). The polypeptide is 2-succinyl-5-enolpyruvyl-6-hydroxy-3-cyclohexene-1-carboxylate synthase (Leuconostoc citreum (strain KM20)).